The chain runs to 548 residues: 5-epi-aristolochene synthase (548 aa).

Residues Arg-264, Asp-301, Asp-305, Arg-441, and Asp-444 each contribute to the (2E,6E)-farnesyl diphosphate site. Residues Asp-301 and Asp-305 each contribute to the Mg(2+) site. The DDXXD motif signature appears at 301 to 305 (DDTFD). Asp-444, Asp-445, Thr-448, and Glu-452 together coordinate Mg(2+).

This sequence belongs to the terpene synthase family. In terms of assembly, monomer. It depends on Mg(2+) as a cofactor. In terms of processing, self-alkylated at Tyr-520 in the presence of (2Z,6E)-farnesyl diphosphate ((Z,E)-FPP). Self-alkylated at Asp-444 at warm temperature (42 degrees Celsius) in the presence of (2E,6E)-farnesyl diphosphate ((E,E)-FPP).

It is found in the cytoplasm. It carries out the reaction (2E,6E)-farnesyl diphosphate = (+)-5-epi-aristolochene + diphosphate. The enzyme catalyses (2Z,6E)-farnesyl diphosphate = (+)-2-epi-prezizaene + diphosphate. It catalyses the reaction (2Z,6E)-farnesyl diphosphate = (-)-alpha-cedrene + diphosphate. The catalysed reaction is (2Z,6E)-farnesyl diphosphate = (-)-beta-curcumene + diphosphate. The protein operates within secondary metabolite biosynthesis; terpenoid biosynthesis. Its activity is regulated as follows. Inhibited activity toward farnesyl diphosphate (FPP) by anilinogeranyl diphosphate (AGPP); AGPP undergoes a cyclization event leading to the formation of a novel macrocyclic paracyclophane alkaloid. Repressed by sesquilavandulyl diphosphate (SPP) via the induction of self-alkyation. Its function is as follows. Catalyzes the cyclization of trans,trans-farnesyl diphosphate (FPP) to the bicyclic intermediate 5-epi-aristolochene, initial step in the conversion of FPP to the sesquiterpenoid antifungal phytoalexin capsidiol. Produces germacrene A as an enzyme-bound intermediate that is not released by the enzyme, but is further cyclized to produce the bicyclic 5-epi-aristolochene. Mediates, at low levels, the formation of 4-epi-eremophilene and premnaspirodiene from trans,trans-farnesyl diphosphate. Also mediates the conversion of cis,trans-farnesyl diphosphate to cisoid minor products such as (+)-2-epi-prezizaene, (-)-alpha-cedrene and, to a lesser extent, (-)-beta-curcumene; also produces, at low levels, alpha-acoradiene and 4-epi-alpha-acoradiene, but barely nerolidol, alpha-bisabolol, epi-alpha-bisabolol and cis-farnesol. In Nicotiana tabacum (Common tobacco), this protein is 5-epi-aristolochene synthase (EAS3).